The following is a 962-amino-acid chain: UvrABC system protein A (962 aa).

38–45 (GISGSGKS) contacts ATP. 2 ABC transporter domains span residues 319–597 (WSKS…PDSL) and 617–944 (PSGR…RFLR). 649–656 (GVSGSGKS) lines the ATP pocket. Residues 748 to 774 (CEACGGDGIIKIEMHFLADVYVPCEVC) form a C4-type zinc finger.

This sequence belongs to the ABC transporter superfamily. UvrA family. Forms a heterotetramer with UvrB during the search for lesions.

It localises to the cytoplasm. Its function is as follows. The UvrABC repair system catalyzes the recognition and processing of DNA lesions. UvrA is an ATPase and a DNA-binding protein. A damage recognition complex composed of 2 UvrA and 2 UvrB subunits scans DNA for abnormalities. When the presence of a lesion has been verified by UvrB, the UvrA molecules dissociate. The sequence is that of UvrABC system protein A from Methanothermobacter thermautotrophicus (strain ATCC 29096 / DSM 1053 / JCM 10044 / NBRC 100330 / Delta H) (Methanobacterium thermoautotrophicum).